A 446-amino-acid polypeptide reads, in one-letter code: Zinc finger protein BALDIBIS (446 aa).

Residues 20–53 form a disordered region; that stretch reads EHIAPNPNPNPNPTSSNSAKRKRNLPGNPDPDAE. At Ser-58 the chain carries Phosphoserine. 2 consecutive C2H2-type zinc fingers follow at residues 68–90 and 110–140; these read FICE…RRGH and YICP…SRKH. The Nuclear localization signal motif lies at 132–139; that stretch reads IKKHFSRK. The C2H2-type 2; degenerate zinc-finger motif lies at 145 to 168; the sequence is WKCDKCSKKYAVMSDWKAHSKICG. 8 residues coordinate Zn(2+): Cys-147, Cys-150, His-163, Cys-167, Cys-174, Cys-176, His-189, and Cys-193. Residues 172–195 form a CCHC-type 2; atypical zinc finger; that stretch reads YRCDCGTLFSRKDSFITHRAFCDA. The segment at 182–194 is SHR-binding; it reads RKDSFITHRAFCD. The segment at 425 to 446 is disordered; it reads HNLPDSSPPASTDGTPTADMNQ. The segment covering 427 to 446 has biased composition (polar residues); sequence LPDSSPPASTDGTPTADMNQ.

Binds to RGA and SCL3 competitively in the nucleus. Expressed in roots, especially in vascular initials, cortex, endodermis, and quiescent center (QC).

The protein resides in the nucleus. Transcription factor that, together with JKD, regulates tissue boundaries and asymmetric cell division in roots by a rapid up-regulation of 'SCARECROW' (SCR), thus controlling the nuclear localization of 'SHORT-ROOT' (SHR) and restricting its action. Confines CYCD6 expression to the cortex-endodermis initial/daughter (CEI/CEID) tissues. Binds DNA via its zinc fingers. Recognizes and binds to SCL3 promoter sequence 5'-AGACAA-3' to promote its expression when in complex with RGA. The chain is Zinc finger protein BALDIBIS from Arabidopsis thaliana (Mouse-ear cress).